Reading from the N-terminus, the 188-residue chain is HGPRTase-like protein 1 (188 aa).

This sequence belongs to the purine/pyrimidine phosphoribosyltransferase family. Archaeal HPRT subfamily.

May catalyze a purine salvage reaction, the substrate is unknown. In Haloquadratum walsbyi (strain DSM 16854 / JCM 12705 / C23), this protein is HGPRTase-like protein 1.